A 185-amino-acid chain; its full sequence is Protein GrpE (185 aa).

The span at 1 to 11 shows a compositional bias: polar residues; that stretch reads MENTQENPTDQ. A disordered region spans residues 1–38; the sequence is MENTQENPTDQTTEETGREAQAAEPAAQAAENAAPAAE. The segment covering 19 to 38 has biased composition (low complexity); it reads EAQAAEPAAQAAENAAPAAE.

It belongs to the GrpE family. In terms of assembly, homodimer.

It localises to the cytoplasm. In terms of biological role, participates actively in the response to hyperosmotic and heat shock by preventing the aggregation of stress-denatured proteins, in association with DnaK and GrpE. It is the nucleotide exchange factor for DnaK and may function as a thermosensor. Unfolded proteins bind initially to DnaJ; upon interaction with the DnaJ-bound protein, DnaK hydrolyzes its bound ATP, resulting in the formation of a stable complex. GrpE releases ADP from DnaK; ATP binding to DnaK triggers the release of the substrate protein, thus completing the reaction cycle. Several rounds of ATP-dependent interactions between DnaJ, DnaK and GrpE are required for fully efficient folding. In Burkholderia mallei (strain NCTC 10247), this protein is Protein GrpE.